An 806-amino-acid chain; its full sequence is Protein bimA (806 aa).

TPR repeat units follow at residues 76 to 109 (LGCS…WTSR) and 127 to 160 (AAVL…NPFM). Disordered regions lie at residues 202–348 (VLPP…HRLG), 353–372 (TVSG…QGVG), and 401–460 (REVK…ASSK). Positions 224-237 (AGTTRSDSTSTHGS) are enriched in polar residues. Residues 246-257 (GSTVSVASSGTG) show a composition bias toward low complexity. The bimA domain stretch occupies residues 260–399 (LPREGMETPG…ISSTALGVKE (140 aa)). Residues 328–348 (TKFESDEGHTERDAGMGHRLG) are compositionally biased toward basic and acidic residues. Residues 408–421 (TTGNKARTTTSSNV) show a composition bias toward polar residues. Residues 432–445 (HAGEIHDGDSKEYR) show a composition bias toward basic and acidic residues. A compositionally biased stretch (low complexity) spans 446–459 (GTSSTSNGSQNASS). TPR repeat units lie at residues 513 to 546 (PWVL…APSR), 581 to 614 (PEAW…DPHF), 616 to 648 (YGFT…DSRH), 649 to 682 (YNAW…NPSN), 684 to 716 (VLIC…APHS), and 751 to 784 (ANVH…DPKA).

This sequence belongs to the APC3/CDC27 family.

It is found in the nucleus. In terms of biological role, required for the completion of mitosis in Aspergillus nidulans. This chain is Protein bimA (bimA), found in Emericella nidulans (strain FGSC A4 / ATCC 38163 / CBS 112.46 / NRRL 194 / M139) (Aspergillus nidulans).